A 200-amino-acid polypeptide reads, in one-letter code: Small ribosomal subunit protein eS8A (200 aa).

The interval 1–31 (MGISRDSRHKRSATGAKRAQFRKKRKFELGR) is disordered. At T62 the chain carries Phosphothreonine. A phosphoserine mark is found at S66, S69, S73, and S86. T107 is subject to Phosphothreonine. Phosphoserine is present on residues S154, S155, S158, and S161.

The protein belongs to the eukaryotic ribosomal protein eS8 family. In terms of assembly, component of the small ribosomal subunit (SSU). Mature yeast ribosomes consist of a small (40S) and a large (60S) subunit. The 40S small subunit contains 1 molecule of ribosomal RNA (18S rRNA) and 33 different proteins (encoded by 57 genes). The large 60S subunit contains 3 rRNA molecules (25S, 5.8S and 5S rRNA) and 46 different proteins (encoded by 81 genes).

It localises to the cytoplasm. Its function is as follows. Component of the ribosome, a large ribonucleoprotein complex responsible for the synthesis of proteins in the cell. The small ribosomal subunit (SSU) binds messenger RNAs (mRNAs) and translates the encoded message by selecting cognate aminoacyl-transfer RNA (tRNA) molecules. The large subunit (LSU) contains the ribosomal catalytic site termed the peptidyl transferase center (PTC), which catalyzes the formation of peptide bonds, thereby polymerizing the amino acids delivered by tRNAs into a polypeptide chain. The nascent polypeptides leave the ribosome through a tunnel in the LSU and interact with protein factors that function in enzymatic processing, targeting, and the membrane insertion of nascent chains at the exit of the ribosomal tunnel. The chain is Small ribosomal subunit protein eS8A from Saccharomyces cerevisiae (strain ATCC 204508 / S288c) (Baker's yeast).